Reading from the N-terminus, the 1128-residue chain is Membrane-associated guanylate kinase, WW and PDZ domain-containing protein 3 (1128 aa).

A PDZ 1 domain is found at 22–108; the sequence is WGGPAGPDPE…PVRLKTVRPG (87 aa). The Guanylate kinase-like domain maps to 116 to 290; it reads RHYLSLQFQK…SMDFRNYMSR (175 aa). 123–130 is an ATP binding site; that stretch reads FQKGSIDH. The segment at 184 to 276 is disordered; it reads TYDGNFYGTP…DWMKPVPSYN (93 aa). Residues 193–204 show a composition bias toward pro residues; the sequence is PKPPAEPSPFQP. Residues 238–247 show a composition bias toward acidic residues; the sequence is LPEDEEEEEK. A compositionally biased stretch (basic and acidic residues) spans 257–267; sequence ENKEKHSDSSD. WW domains are found at residues 295 to 328 and 341 to 374; these read EPLP…DPRL and GELP…NPVL. 2 PDZ domains span residues 412–494 and 581–657; these read RTSL…TLCR and TIPL…LILR. The disordered stretch occupies residues 658-688; it reads GGPPSPTKTGKMKDKQESSGSLEALSDAIPQ. 2 consecutive PDZ domains span residues 728-810 and 852-939; these read DVFL…TVRR and DVCL…VAEE. Disordered stretches follow at residues 939–985 and 999–1018; these read EEHR…GKEV and LAQP…SQAQ. Composition is skewed to polar residues over residues 946–956 and 965–974; these read SGTNSAKQSPA and AQSSASSTDR. One can recognise a PDZ 6 domain in the interval 1024–1106; the sequence is PVELERGPRG…KVLLLLRPGT (83 aa).

It belongs to the MAGUK family.

The protein resides in the cell membrane. It localises to the cell junction. It is found in the tight junction. Functionally, acts as a scaffolding protein at cell-cell junctions, thereby regulating various cellular and signaling processes. This chain is Membrane-associated guanylate kinase, WW and PDZ domain-containing protein 3 (MAGI3), found in Gallus gallus (Chicken).